Here is a 479-residue protein sequence, read N- to C-terminus: Ribosomal RNA small subunit methyltransferase F (479 aa).

S-adenosyl-L-methionine contacts are provided by residues 125-131 (AAAPGSK), E149, D176, and D194. C247 functions as the Nucleophile in the catalytic mechanism.

This sequence belongs to the class I-like SAM-binding methyltransferase superfamily. RsmB/NOP family.

It is found in the cytoplasm. It catalyses the reaction cytidine(1407) in 16S rRNA + S-adenosyl-L-methionine = 5-methylcytidine(1407) in 16S rRNA + S-adenosyl-L-homocysteine + H(+). Functionally, specifically methylates the cytosine at position 1407 (m5C1407) of 16S rRNA. The sequence is that of Ribosomal RNA small subunit methyltransferase F from Salmonella enteritidis PT4 (strain P125109).